The following is a 475-amino-acid chain: Equilibrative nucleoside transporter 3 (475 aa).

Residues 1–24 are disordered; that stretch reads MAVVSEDDFQHSSNSTYRTTSSSL. Residues 1 to 53 are Cytoplasmic-facing; the sequence is MAVVSEDDFQHSSNSTYRTTSSSLRADQEALLEKLLDRPPPGLQRPEDRFCGT. The segment covering 12-23 has biased composition (low complexity); sequence SSNSTYRTTSSS. Phosphoserine is present on residues Ser-21 and Ser-23. The short motif at 31 to 32 is the Dileucine internalization motif element; it reads LL. The chain crosses the membrane as a helical span at residues 54-74; the sequence is YIIFFSLGIGSLLPWNFFITA. The Extracellular portion of the chain corresponds to 75–105; the sequence is KEYWMFKLRNSSSPATGEDPEGSDILNYFES. Asn-84 carries an N-linked (GlcNAc...) asparagine glycan. The chain crosses the membrane as a helical span at residues 106–126; the sequence is YLAVASTVPSMLCLVANFLLV. Topologically, residues 127–134 are cytoplasmic; sequence NRVAVHIR. The chain crosses the membrane as a helical span at residues 135–155; it reads VLASLTVILAIFMVITALVKV. Over 156 to 162 the chain is Extracellular; it reads DTSSWTR. The chain crosses the membrane as a helical span at residues 163-183; the sequence is GFFAVTIVCMVILSGASTVFS. Topologically, residues 184 to 199 are cytoplasmic; it reads SSIYGMTGSFPMRNSQ. Residues 200–220 traverse the membrane as a helical segment; sequence ALISGGAMGGTVSAVASLVDL. The Extracellular portion of the chain corresponds to 221–230; sequence AASSDVRNSA. The chain crosses the membrane as a helical span at residues 231-251; the sequence is LAFFLTATVFLVLCMGLYLLL. Residues 252–305 lie on the Cytoplasmic side of the membrane; the sequence is SRLEYARYYMRPVLAAHVFSGEEELPQDSLSAPSVASRFIDSHTPPLRPILKKT. A helical membrane pass occupies residues 306 to 326; sequence ASLGFCVTYVFFITSLIYPAI. Residues 327–337 are Extracellular-facing; that stretch reads CTNIESLNKGS. The chain crosses the membrane as a helical span at residues 338-358; the sequence is GSLWTTKFFIPLTTFLLYNFA. Residues 359-377 are Cytoplasmic-facing; the sequence is DLCGRQLTAWIQVPGPNSK. A helical membrane pass occupies residues 378–398; the sequence is ALPGFVLLRTCLIPLFVLCNY. The Extracellular portion of the chain corresponds to 399-415; sequence QPRVHLKTVVFQSDVYP. Residues 416 to 436 traverse the membrane as a helical segment; sequence ALLSSLLGLSNGYLSTLALLY. Residues 437–454 are Cytoplasmic-facing; sequence GPKIVPRELAEATGVVMS. Residues 455–475 form a helical membrane-spanning segment; sequence FYVCLGLTLGSACSTLLVHLI.

This sequence belongs to the SLC29A/ENT transporter (TC 2.A.57) family. In terms of tissue distribution, widely expressed in both adult and fetal tissues. Highest levels in placenta, uterus, ovary, spleen, lymph node and bone marrow. Expressed in liver. Lowest levels in brain and heart. Expressed in macrophages.

Its subcellular location is the lysosome membrane. It localises to the late endosome membrane. The protein resides in the mitochondrion membrane. It is found in the cell membrane. The catalysed reaction is adenosine(in) = adenosine(out). It catalyses the reaction guanosine(in) = guanosine(out). It carries out the reaction inosine(in) = inosine(out). The enzyme catalyses uridine(out) = uridine(in). The catalysed reaction is cytidine(in) = cytidine(out). It catalyses the reaction thymidine(in) = thymidine(out). It carries out the reaction 2'-deoxyadenosine(in) = 2'-deoxyadenosine(out). The enzyme catalyses 2'-deoxycytidine(in) = 2'-deoxycytidine(out). The catalysed reaction is guanine(out) = guanine(in). It catalyses the reaction uracil(in) = uracil(out). It carries out the reaction (R)-noradrenaline(out) = (R)-noradrenaline(in). The enzyme catalyses dopamine(out) = dopamine(in). The catalysed reaction is serotonin(out) = serotonin(in). It catalyses the reaction tyramine(in) = tyramine(out). It carries out the reaction ATP(in) = ATP(out). Its function is as follows. Uniporter that mediates the facilitative transport of nucleoside across lysosomal and mitochondrial membranes. Functions as a non-electrogenic Na(+)-independent transporter. Substrate transport is pH-dependent and enhanced under acidic condition, probably reflecting the location of the transporter in acidic intracellular compartments. Proton is not a cotransporting ion but most likely change the ionization state of the transporter which dictates transport-permissible/impermissible conformation for nucleoside translocation. May direct the nucleoside transport from lysosomes to cytosol or cytosol to mitochondria to facilitate the fundamental function of salvage synthesis of nucleic acids. Involved in the transport of nucleosides (adenosine, guanosine, uridine, thymidine, cytidine and inosine) and deoxynucleosides (deoxyadenosine, deoxycytidine). Also mediates transport of purine nucleobases (adenine, guanine) and pyrimidine nucleobases (uracil). Also able to transport monoamine neurotransmitters dopamine, serotonin, noradrenaline and tyramine. Capable of transporting ATP. Mediates nucleoside export from lysosomes in macrophages, which regulates macrophage functions and numbers. The sequence is that of Equilibrative nucleoside transporter 3 from Homo sapiens (Human).